Here is a 53-residue protein sequence, read N- to C-terminus: Collagen alpha-1(I) chain (53 aa).

Residues 1 to 53 form a disordered region; the sequence is SYGYBZKSAGVSVPGPMGPSGPRGLPGPPGAPGPZGFZGPPGZPGZPGSSGPM. Allysine is present on Lys7. The residue at position 8 (Ser8) is a Phosphoserine. A compositionally biased stretch (low complexity) spans 10-23; that stretch reads GVSVPGPMGPSGPR. 6 positions are modified to 4-hydroxyproline: Pro26, Pro29, Pro32, Pro41, Pro44, and Pro47. Residues 34–53 show a composition bias toward low complexity; sequence PZGFZGPPGZPGZPGSSGPM.

The protein belongs to the fibrillar collagen family. As to quaternary structure, trimers of one alpha 2(I) and two alpha 1(I) chains. Interacts with MRC2. Interacts with TRAM2. Interacts with MFAP4 in a Ca (2+)-dependent manner. In terms of processing, contains mostly 4-hydroxyproline. Proline residues at the third position of the tripeptide repeating unit (G-X-Y) are hydroxylated in some or all of the chains. Contains 3-hydroxyproline at a few sites. This modification occurs on the first proline residue in the sequence motif Gly-Pro-Hyp, where Hyp is 4-hydroxyproline. Post-translationally, lysine residues at the third position of the tripeptide repeating unit (G-X-Y) are 5-hydroxylated in some or all of the chains. In terms of processing, O-glycosylated on hydroxylated lysine residues. The O-linked glycan consists of a Glc-Gal disaccharide. In terms of tissue distribution, forms the fibrils of tendon, ligaments and bones. In bones the fibrils are mineralized with calcium hydroxyapatite.

It localises to the secreted. The protein resides in the extracellular space. Its subcellular location is the extracellular matrix. Functionally, type I collagen is a member of group I collagen (fibrillar forming collagen). This is Collagen alpha-1(I) chain (COL1A1) from Oryctolagus cuniculus (Rabbit).